Reading from the N-terminus, the 212-residue chain is Large ribosomal subunit protein uL3 (212 aa).

It belongs to the universal ribosomal protein uL3 family. As to quaternary structure, part of the 50S ribosomal subunit. Forms a cluster with proteins L14 and L19.

One of the primary rRNA binding proteins, it binds directly near the 3'-end of the 23S rRNA, where it nucleates assembly of the 50S subunit. The sequence is that of Large ribosomal subunit protein uL3 from Ruminiclostridium cellulolyticum (strain ATCC 35319 / DSM 5812 / JCM 6584 / H10) (Clostridium cellulolyticum).